An 842-amino-acid chain; its full sequence is Alanine--tRNA ligase (842 aa).

His549, His553, Cys650, and His654 together coordinate Zn(2+).

It belongs to the class-II aminoacyl-tRNA synthetase family. It depends on Zn(2+) as a cofactor.

Its subcellular location is the cytoplasm. The catalysed reaction is tRNA(Ala) + L-alanine + ATP = L-alanyl-tRNA(Ala) + AMP + diphosphate. Catalyzes the attachment of alanine to tRNA(Ala) in a two-step reaction: alanine is first activated by ATP to form Ala-AMP and then transferred to the acceptor end of tRNA(Ala). Also edits incorrectly charged Ser-tRNA(Ala) and Gly-tRNA(Ala) via its editing domain. The chain is Alanine--tRNA ligase from Campylobacter jejuni subsp. doylei (strain ATCC BAA-1458 / RM4099 / 269.97).